The chain runs to 634 residues: Threonine--tRNA ligase (634 aa).

Residues 1–61 form the TGS domain; sequence MINITLPDGS…DHDASLRIIT (61 aa). Positions 243-534 are catalytic; it reads DHRRIGKAQD…LIEHHAGAFP (292 aa). Cys-334, His-385, and His-511 together coordinate Zn(2+).

Belongs to the class-II aminoacyl-tRNA synthetase family. In terms of assembly, homodimer. Zn(2+) is required as a cofactor.

The protein resides in the cytoplasm. The catalysed reaction is tRNA(Thr) + L-threonine + ATP = L-threonyl-tRNA(Thr) + AMP + diphosphate + H(+). Functionally, catalyzes the attachment of threonine to tRNA(Thr) in a two-step reaction: L-threonine is first activated by ATP to form Thr-AMP and then transferred to the acceptor end of tRNA(Thr). Also edits incorrectly charged L-seryl-tRNA(Thr). The polypeptide is Threonine--tRNA ligase (Xanthomonas euvesicatoria pv. vesicatoria (strain 85-10) (Xanthomonas campestris pv. vesicatoria)).